Reading from the N-terminus, the 235-residue chain is Octanoyltransferase (235 aa).

The BPL/LPL catalytic domain maps to Ala37–Leu220. Substrate contacts are provided by residues Arg78–His85, Ala150–Gly152, and Gly163–Ala165. Cys181 serves as the catalytic Acyl-thioester intermediate.

It belongs to the LipB family.

The protein localises to the cytoplasm. It carries out the reaction octanoyl-[ACP] + L-lysyl-[protein] = N(6)-octanoyl-L-lysyl-[protein] + holo-[ACP] + H(+). Its pathway is protein modification; protein lipoylation via endogenous pathway; protein N(6)-(lipoyl)lysine from octanoyl-[acyl-carrier-protein]: step 1/2. Its function is as follows. Catalyzes the transfer of endogenously produced octanoic acid from octanoyl-acyl-carrier-protein onto the lipoyl domains of lipoate-dependent enzymes. Lipoyl-ACP can also act as a substrate although octanoyl-ACP is likely to be the physiological substrate. The chain is Octanoyltransferase from Mycobacterium leprae (strain Br4923).